The following is a 1223-amino-acid chain: DNA-directed RNA polymerase subunit beta' (1223 aa).

Zn(2+) is bound by residues Cys-60, Cys-62, Cys-75, and Cys-78. Asp-449, Asp-451, and Asp-453 together coordinate Mg(2+). The Zn(2+) site is built by Cys-818, Cys-892, Cys-899, and Cys-902.

It belongs to the RNA polymerase beta' chain family. As to quaternary structure, the RNAP catalytic core consists of 2 alpha, 1 beta, 1 beta' and 1 omega subunit. When a sigma factor is associated with the core the holoenzyme is formed, which can initiate transcription. The cofactor is Mg(2+). It depends on Zn(2+) as a cofactor.

The catalysed reaction is RNA(n) + a ribonucleoside 5'-triphosphate = RNA(n+1) + diphosphate. Its function is as follows. DNA-dependent RNA polymerase catalyzes the transcription of DNA into RNA using the four ribonucleoside triphosphates as substrates. The polypeptide is DNA-directed RNA polymerase subunit beta' (Lactobacillus gasseri (strain ATCC 33323 / DSM 20243 / BCRC 14619 / CIP 102991 / JCM 1131 / KCTC 3163 / NCIMB 11718 / NCTC 13722 / AM63)).